A 144-amino-acid polypeptide reads, in one-letter code: MFTLTQLCPTPLENARQLHLSLTAEERCRRRLHCHSDEGESLYLKLPRGITLQPGDRLRDEDATVIVTVHAKPEPTLKVMASTPLDLLRAAYHLGNRHVPLEIHTDYLRLGADSVVQTMLEQRGLTVTFEVAPFCPERGAYHAH.

This sequence belongs to the UreE family.

It localises to the cytoplasm. In terms of biological role, involved in urease metallocenter assembly. Binds nickel. Probably functions as a nickel donor during metallocenter assembly. The chain is Urease accessory protein UreE from Thermosynechococcus vestitus (strain NIES-2133 / IAM M-273 / BP-1).